Here is a 144-residue protein sequence, read N- to C-terminus: Oleosin H2 (144 aa).

Ala2 carries the post-translational modification N-acetylalanine. 3 helical membrane passes run 28-48 (VLAV…AGLI), 53-73 (IIGL…LVPA), and 75-95 (LTIA…ITAL). A Proline-knot motif is present at residues 61-72 (PLFVIFSPILVP). Positions 124–144 (QETVGQKTREAGQRSQDVIRP) are disordered.

This sequence belongs to the oleosin family. As to expression, expressed in seeds (at protein level).

The protein resides in the lipid droplet. Its subcellular location is the membrane. May have a structural role to stabilize the lipid body during desiccation of the seed by preventing coalescence of the oil. Probably interacts with both lipid and phospholipid moieties of lipid bodies. May also provide recognition signals for specific lipase anchorage in lipolysis during seedling growth. The polypeptide is Oleosin H2 (Sesamum indicum (Oriental sesame)).